Consider the following 729-residue polypeptide: Solute carrier family 15 member 2 (729 aa).

The interval 1 to 34 (MNPFQQNESKETLFSPVSTEETPPRLSSPAKKTP) is disordered. The Cytoplasmic portion of the chain corresponds to 1–57 (MNPFQQNESKETLFSPVSTEETPPRLSSPAKKTPPKICGSNYPLSIAFIVVNEFCER). S9 carries the phosphoserine modification. T12 is subject to Phosphothreonine. S28 bears the Phosphoserine mark. Residues 58 to 78 (FSYYGMKAVLTLYFLYFLHWN) traverse the membrane as a helical segment. Residues 79–87 (EDTSTSVYH) lie on the Extracellular side of the membrane. The chain crosses the membrane as a helical span at residues 88-108 (AFSSLCYFTPILGAAIADSWL). Residues 109 to 113 (GKFKT) are Cytoplasmic-facing. The helical transmembrane segment at 114–134 (IIYLSLVNVLGHVIKSLSAFP) threads the bilayer. At 135–139 (ILGGK) the chain is on the extracellular side. A helical transmembrane segment spans residues 140-160 (VVHTVLSLVGLCLIALGTGGI). Residues 161-183 (KPCVAAFGGDQFEEKHAEERTRY) are Cytoplasmic-facing. Residues 184-204 (FSGFYLAINAGSLISTFITPM) traverse the membrane as a helical segment. Over 205–217 (LRGDVQCFGEDCY) the chain is Extracellular. The helical transmembrane segment at 218-238 (ALAFGVPGLLMVIALVVFAMG) threads the bilayer. Topologically, residues 239 to 295 (SKMYKKPPPEGNIVAQVVKCIWFAISNRFKNRSEDIPKRQHWLDWAAEKYPKQLIMD) are cytoplasmic. Residues 296-316 (VKTLTRVLFLYIPLPMFWALL) traverse the membrane as a helical segment. Residues 317 to 343 (DQQGSRWTLQATKMNGNLGFFVLQPDQ) are Extracellular-facing. The helical transmembrane segment at 344-364 (MQVLNPLLVLIFIPLFDLVIY) threads the bilayer. At 365 to 380 (RLISKCGINFTSLRKM) the chain is on the cytoplasmic side. A helical membrane pass occupies residues 381–401 (AVGMVLACLAFAAAATVEIKI). Over 402–611 (NEMAPPQPGS…PANKVSIAWQ (210 aa)) the chain is Extracellular. Residues 402–611 (NEMAPPQPGS…PANKVSIAWQ (210 aa)) form an extracellular domain (ECD) region. 5 N-linked (GlcNAc...) asparagine glycosylation sites follow: N435, N472, N508, N528, and N587. A helical transmembrane segment spans residues 612–632 (LPQYALVTAGEVMFSVTGLEF). At 633–643 (SYSQAPSSMKS) the chain is on the cytoplasmic side. The chain crosses the membrane as a helical span at residues 644 to 664 (VLQAAWLLTVAIGNIIVLVVA). Topologically, residues 665 to 674 (QFSGLVQWAE) are extracellular. A helical membrane pass occupies residues 675–695 (FVLFSCLLLVVCLIFSIMGYY). Residues 696–729 (YIPIKSEDIQGPEDKQIPHMQGNMINLETKKTKL) lie on the Cytoplasmic side of the membrane.

The protein belongs to the major facilitator superfamily. Proton-dependent oligopeptide transporter (POT/PTR) (TC 2.A.17) family. As to quaternary structure, interacts (via extracellular domain region) with trypsin. Strongly expressed in kidney. Also detected in brain, lung, liver and heart.

Its subcellular location is the apical cell membrane. It localises to the cytoplasmic vesicle. The protein localises to the phagosome membrane. The protein resides in the cell membrane. It carries out the reaction a dipeptide(out) + 2 H(+)(out) = a dipeptide(in) + 2 H(+)(in). It catalyses the reaction N-acetyl-D-muramoyl-L-alanyl-D-isoglutamine(out) + 3 H(+)(out) = N-acetyl-D-muramoyl-L-alanyl-D-isoglutamine(in) + 3 H(+)(in). The catalysed reaction is glycyl-L-leucine(out) + 2 H(+)(out) = glycyl-L-leucine(in) + 2 H(+)(in). The enzyme catalyses glycyl-L-lysine(out) + 2 H(+)(out) = glycyl-L-lysine(in) + 2 H(+)(in). It carries out the reaction glycyl-L-glutamate(out) + 3 H(+)(out) = glycyl-L-glutamate(in) + 3 H(+)(in). It catalyses the reaction L-alanyl-L-alanine(out) + 2 H(+)(out) = L-alanyl-L-alanine(in) + 2 H(+)(in). The catalysed reaction is an L-amino acid tripeptide(out) + 2 H(+)(out) = an L-amino acid tripeptide(in) + 2 H(+)(in). The enzyme catalyses carnosine(out) + 2 H(+)(out) = carnosine(in) + 2 H(+)(in). Its function is as follows. Proton-coupled amino-acid transporter that transports oligopeptides of 2 to 4 amino acids with a preference for dipeptides. Transports neutral and anionic dipeptides with a proton to peptide stoichiometry of 2:1 or 3:1. In kidney, involved in the absorption of circulating di- and tripeptides from the glomerular filtrate. Can also transport beta-lactam antibiotics, such as the aminocephalosporin cefadroxil, and other antiviral and anticancer drugs. Transports the dipeptide-like aminopeptidase inhibitor bestatin. Also able to transport carnosine. Involved in innate immunity by promoting the detection of microbial pathogens by NOD-like receptors (NLRs). Mediates transport of bacterial peptidoglycans across the plasma membrane or, in macrophages, the phagosome membrane: catalyzes the transport of certain bacterial peptidoglycans, such as muramyl dipeptide (MDP), the NOD2 ligand. The protein is Solute carrier family 15 member 2 of Oryctolagus cuniculus (Rabbit).